The sequence spans 375 residues: 23S rRNA (uracil(747)-C(5))-methyltransferase RlmC (375 aa).

[4Fe-4S] cluster contacts are provided by Cys3, Cys11, Cys14, and Cys87. Residues Gln212, Phe241, Glu262, and Asn307 each contribute to the S-adenosyl-L-methionine site. Cys334 functions as the Nucleophile in the catalytic mechanism.

The protein belongs to the class I-like SAM-binding methyltransferase superfamily. RNA M5U methyltransferase family. RlmC subfamily.

It catalyses the reaction uridine(747) in 23S rRNA + S-adenosyl-L-methionine = 5-methyluridine(747) in 23S rRNA + S-adenosyl-L-homocysteine + H(+). Catalyzes the formation of 5-methyl-uridine at position 747 (m5U747) in 23S rRNA. The chain is 23S rRNA (uracil(747)-C(5))-methyltransferase RlmC from Shigella boydii serotype 4 (strain Sb227).